The chain runs to 81 residues: Gamma-conotoxin-like TeA53 (81 aa).

The N-terminal stretch at methionine 1–alanine 19 is a signal peptide. The propeptide occupies leucine 20–arginine 42. Intrachain disulfides connect cysteine 49–cysteine 63, cysteine 56–cysteine 67, and cysteine 62–cysteine 72.

This sequence belongs to the conotoxin O2 superfamily. As to expression, expressed by the venom duct.

It localises to the secreted. Its function is as follows. Gamma-conotoxins may act on voltage-gated non-specific cation pacemaker channels (HCN). The chain is Gamma-conotoxin-like TeA53 from Conus textile (Cloth-of-gold cone).